A 269-amino-acid chain; its full sequence is Energy-coupling factor transporter ATP-binding protein EcfA1 (269 aa).

The region spanning 8–242 (ITFNHVRFKY…GDGLTEIGLD (235 aa)) is the ABC transporter domain. 42 to 49 (GHNGSGKS) is a binding site for ATP.

This sequence belongs to the ABC transporter superfamily. Energy-coupling factor EcfA family. Forms a stable energy-coupling factor (ECF) transporter complex composed of 2 membrane-embedded substrate-binding proteins (S component), 2 ATP-binding proteins (A component) and 2 transmembrane proteins (T component).

The protein resides in the cell membrane. Functionally, ATP-binding (A) component of a common energy-coupling factor (ECF) ABC-transporter complex. Unlike classic ABC transporters this ECF transporter provides the energy necessary to transport a number of different substrates. This Staphylococcus saprophyticus subsp. saprophyticus (strain ATCC 15305 / DSM 20229 / NCIMB 8711 / NCTC 7292 / S-41) protein is Energy-coupling factor transporter ATP-binding protein EcfA1.